The primary structure comprises 141 residues: Granulocyte-macrophage colony-stimulating factor (141 aa).

The signal sequence occupies residues 1 to 17; it reads MWLQNLLFLGIVVYSLS. Ser22 carries O-linked (GalNAc...) serine glycosylation. An O-linked (GalNAc...) threonine glycan is attached at Thr27. 2 disulfides stabilise this stretch: Cys68-Cys110 and Cys102-Cys135. Asn83 and Asn92 each carry an N-linked (GlcNAc...) asparagine glycan.

It belongs to the GM-CSF family. As to quaternary structure, monomer. The signaling GM-CSF receptor complex is a dodecamer of two head-to-head hexamers of two alpha, two beta, and two ligand subunits.

It is found in the secreted. Cytokine that stimulates the growth and differentiation of hematopoietic precursor cells from various lineages, including granulocytes, macrophages, eosinophils and erythrocytes. The sequence is that of Granulocyte-macrophage colony-stimulating factor (Csf2) from Mus musculus (Mouse).